A 464-amino-acid chain; its full sequence is Tryprostatin B synthase (464 aa).

Positions 94 and 102 each coordinate brevianamide F. Dimethylallyl diphosphate-binding residues include R113, K201, and Y203. A brevianamide F-binding site is contributed by Y205. Dimethylallyl diphosphate-binding residues include K294, Y296, Q380, Y382, Y446, and Y450.

It belongs to the tryptophan dimethylallyltransferase family.

The enzyme catalyses brevianamide F + dimethylallyl diphosphate = tryprostatin B + diphosphate. The protein operates within mycotoxin biosynthesis. In terms of biological role, brevianamide F prenyltransferase; part of the gene cluster that mediates the biosynthesis of fumitremorgins, indole alkaloids that carry not only intriguing chemical structures, but also interesting biological and pharmacological activities. The biosynthesis of fumitremorgin-type alkaloids begins by condensation of the two amino acids L-tryptophan and L-proline to brevianamide F, catalyzed by the non-ribosomal peptide synthetase ftmA. Brevianamide F is then prenylated by the prenyltransferase ftmPT1/ftmB in the presence of dimethylallyl diphosphate, resulting in the formation of tryprostatin B. The three cytochrome P450 monooxygenases, ftmP450-1/ftmC, ftmP450-2/ftmE and ftmP450-3/FtmG, are responsible for the conversion of tryprostatin B to 6-hydroxytryprostatin B, tryprostatin A to fumitremorgin C and fumitremorgin C to 12,13-dihydroxyfumitremorgin C, respectively. The putative methyltransferase ftmMT/ftmD is expected for the conversion of 6-hydroxytryprostatin B to tryprostatin A. FtmPT2/FtmH catalyzes the prenylation of 12,13-dihydroxyfumitre-morgin C in the presence of dimethylallyl diphosphate, resulting in the formation of fumitremorgin B. Fumitremorgin B is further converted to verruculogen by ftmOx1/ftmF via the insertion of an endoperoxide bond between the two prenyl moieties. In some fungal species, verruculogen is further converted to fumitremorgin A, but the enzymes involved in this step have not been identified yet. The sequence is that of Tryprostatin B synthase from Aspergillus fumigatus (Neosartorya fumigata).